A 468-amino-acid polypeptide reads, in one-letter code: 6-phospho-beta-galactosidase (468 aa).

Residues Gln19, His116, Asn159, Glu160, and Asn297 each coordinate D-galactose 6-phosphate. The active-site Proton donor is the Glu160. The active-site Nucleophile is the Glu375. The D-galactose 6-phosphate site is built by Ser428, Trp429, Lys435, and Tyr437.

Belongs to the glycosyl hydrolase 1 family.

It catalyses the reaction a 6-phospho-beta-D-galactoside + H2O = D-galactose 6-phosphate + an alcohol. The protein operates within carbohydrate metabolism; lactose degradation; D-galactose 6-phosphate and beta-D-glucose from lactose 6-phosphate: step 1/1. This chain is 6-phospho-beta-galactosidase, found in Streptococcus gordonii (strain Challis / ATCC 35105 / BCRC 15272 / CH1 / DL1 / V288).